Reading from the N-terminus, the 154-residue chain is 3-hydroxyacyl-[acyl-carrier-protein] dehydratase FabZ (154 aa).

Residue His-54 is part of the active site.

It belongs to the thioester dehydratase family. FabZ subfamily.

It is found in the cytoplasm. The catalysed reaction is a (3R)-hydroxyacyl-[ACP] = a (2E)-enoyl-[ACP] + H2O. Its function is as follows. Involved in unsaturated fatty acids biosynthesis. Catalyzes the dehydration of short chain beta-hydroxyacyl-ACPs and long chain saturated and unsaturated beta-hydroxyacyl-ACPs. The chain is 3-hydroxyacyl-[acyl-carrier-protein] dehydratase FabZ from Shewanella baltica (strain OS223).